We begin with the raw amino-acid sequence, 85 residues long: Large ribosomal subunit protein bL27 (85 aa).

Residues 1-20 (MAHKKGASSSRNGRDSNAQR) are disordered. Residues 7–19 (ASSSRNGRDSNAQ) are compositionally biased toward polar residues.

The protein belongs to the bacterial ribosomal protein bL27 family.

The chain is Large ribosomal subunit protein bL27 from Kineococcus radiotolerans (strain ATCC BAA-149 / DSM 14245 / SRS30216).